Here is a 297-residue protein sequence, read N- to C-terminus: N-acetylmuramic acid 6-phosphate etherase (297 aa).

Positions 55 to 218 (AAAALKSGGR…STGAMVKFGK (164 aa)) constitute an SIS domain. Glutamate 83 serves as the catalytic Proton donor. The active site involves glutamate 114.

This sequence belongs to the GCKR-like family. MurNAc-6-P etherase subfamily. In terms of assembly, homodimer.

It catalyses the reaction N-acetyl-D-muramate 6-phosphate + H2O = N-acetyl-D-glucosamine 6-phosphate + (R)-lactate. Its pathway is amino-sugar metabolism; 1,6-anhydro-N-acetylmuramate degradation. The protein operates within amino-sugar metabolism; N-acetylmuramate degradation. It functions in the pathway cell wall biogenesis; peptidoglycan recycling. In terms of biological role, specifically catalyzes the cleavage of the D-lactyl ether substituent of MurNAc 6-phosphate, producing GlcNAc 6-phosphate and D-lactate. Together with AnmK, is also required for the utilization of anhydro-N-acetylmuramic acid (anhMurNAc) either imported from the medium or derived from its own cell wall murein, and thus plays a role in cell wall recycling. This is N-acetylmuramic acid 6-phosphate etherase from Salmonella agona (strain SL483).